The following is a 1177-amino-acid chain: Zinc finger CCCH domain-containing protein 6 (1177 aa).

Residues 1 to 12 are compositionally biased toward basic and acidic residues; that stretch reads MTDSEHAGHDRE. Disordered regions lie at residues 1-137 and 179-206; these read MTDS…SKEY and QESSGSSFSKESGKKLRSKGSPPGTEYR. Residues 13–31 are compositionally biased toward acidic residues; sequence DGELEDGEIDDAGFEETQD. Residues 27–73 are a coiled coil; sequence EETQDQEAKENEKQKNEKAYRKSRKKHKKEREKKKSKRRKHEKHKHN. The segment covering 32-46 has biased composition (basic and acidic residues); sequence QEAKENEKQKNEKAY. A compositionally biased stretch (basic residues) spans 47–73; it reads RKSRKKHKKEREKKKSKRRKHEKHKHN. Positions 179-188 are enriched in low complexity; the sequence is QESSGSSFSK. 3 consecutive C3H1-type zinc fingers follow at residues 271–297, 299–326, and 327–350; these read KGKQICKYFLEGRCIKGDHCKFNHDAE, EKKKEVCKYYLQGYCTKGENCIYMHSEF, and PCKFYHSGAKCYQGDKCKFSHDDL. The stretch at 347 to 383 forms a coiled coil; sequence HDDLTKETRKLLDKVLNADEELVNEDERELEELRKRG. Disordered stretches follow at residues 383–416, 446–587, 622–654, 670–767, 780–826, 942–988, 1043–1101, and 1132–1162; these read GITPLPKPPPGVGLLPTPSEHFPFSDPEDDFETD, PPAF…ESMQ, QQQPPIARDTAHLGSGPNSSSRMTSHCPLSASG, RYQE…KKPH, PKKL…SERE, EQSG…SSRS, DPRD…PVDG, and LLRPPYSDPRQAREPGQASPTPDEETDDKPL. The span at 493–502 shows a compositional bias: low complexity; that stretch reads HPGSPGHHPC. 2 stretches are compositionally biased toward polar residues: residues 512 to 522 and 564 to 587; these read ENPSLLPSSSE and SSPASLYQQMPSEMQRSADSESMQ. Residues 713–728 show a composition bias toward polar residues; the sequence is RTLQKQTGTLRNQQLP. Residues 753–767 are compositionally biased toward basic and acidic residues; that stretch reads PRLRTVPRQDIKKPH. Residues 955 to 967 are compositionally biased toward basic and acidic residues; it reads GDPRLQKNFDPRL. 2 stretches are compositionally biased toward polar residues: residues 1050–1064 and 1077–1093; these read LSATELSTISSGENT and KNQPSPGEVTVPQNTTA. Ser1150 is modified (phosphoserine).

The sequence is that of Zinc finger CCCH domain-containing protein 6 (Zc3h6) from Mus musculus (Mouse).